Reading from the N-terminus, the 150-residue chain is Cytochrome c-type biogenesis protein CcmE (150 aa).

Over 1–7 (MTRKQKR) the chain is Cytoplasmic. A helical; Signal-anchor for type II membrane protein membrane pass occupies residues 8–28 (LAIIGGGVGFLTAAVLLVMFA). The Periplasmic portion of the chain corresponds to 29–150 (FSQAVAYFYV…VTLGGKENIQ (122 aa)). Residues His-123 and Tyr-127 each contribute to the heme site.

This sequence belongs to the CcmE/CycJ family.

It localises to the cell inner membrane. Its function is as follows. Heme chaperone required for the biogenesis of c-type cytochromes. Transiently binds heme delivered by CcmC and transfers the heme to apo-cytochromes in a process facilitated by CcmF and CcmH. The protein is Cytochrome c-type biogenesis protein CcmE of Sinorhizobium fredii (strain NBRC 101917 / NGR234).